Consider the following 578-residue polypeptide: Galectin-3-binding protein (578 aa).

The signal sequence occupies residues 1 to 18 (MAFLWLFSLWLLVPGTQG). Residues 24–124 (MRLVNGASAN…HEKDAGVVCS (101 aa)) enclose the SRCR domain. 3 cysteine pairs are disulfide-bonded: Cys49-Cys113, Cys62-Cys123, and Cys93-Cys103. Asn69 and Asn102 each carry an N-linked (GlcNAc...) asparagine glycan. Residues 153–221 (CDLFIQVTGQ…FYSRRIEVTM (69 aa)) form the BTB domain. The BACK domain occupies 260-360 (PLELYAYAQA…VLPQELFELQ (101 aa)). N-linked (GlcNAc...) asparagine glycosylation is found at Asn362 and Asn398.

In terms of assembly, homodimers and homomultimers. The multimers form ring-like structures with a diameter of 30-40 nm. Binds LGALS1 and LGALS3. Binds ITGB1, COL4A1, COL5A1, COL6A1, FN1 and NID. The unglycosylated form interacts with PDE4DIP; this interaction, which is PDE4DIP isoform-specific, may connect a pericentrosomal complex to the gamma-tubulin ring complex (gamma-TuRC) to promote microtubule assembly and acetylation.

It is found in the secreted. It localises to the extracellular space. The protein resides in the extracellular matrix. In terms of biological role, promotes integrin-mediated cell adhesion. May stimulate host defense against viruses and tumor cells. The sequence is that of Galectin-3-binding protein (LGALS3BP) from Mesocricetus auratus (Golden hamster).